Here is a 431-residue protein sequence, read N- to C-terminus: Probable pectate lyase 1 (431 aa).

A signal peptide spans 1–20 (MAVLPTWLLAMMCLLFFVGA). 3 N-linked (GlcNAc...) asparagine glycosylation sites follow: asparagine 23, asparagine 28, and asparagine 65. Ca(2+)-binding residues include aspartate 227, aspartate 251, and aspartate 255. Residue arginine 307 is part of the active site.

Belongs to the polysaccharide lyase 1 family. Requires Ca(2+) as cofactor. Expressed in flowers, but not in leaves.

The enzyme catalyses Eliminative cleavage of (1-&gt;4)-alpha-D-galacturonan to give oligosaccharides with 4-deoxy-alpha-D-galact-4-enuronosyl groups at their non-reducing ends.. It participates in glycan metabolism; pectin degradation; 2-dehydro-3-deoxy-D-gluconate from pectin: step 2/5. This chain is Probable pectate lyase 1, found in Arabidopsis thaliana (Mouse-ear cress).